The sequence spans 286 residues: uncharacterized protein (286 aa).

In terms of domain architecture, Radical SAM core spans 36–256 (ENPQHHPSIE…IKGCLLVQLK (221 aa)). [4Fe-4S] cluster contacts are provided by C50, C54, and C57.

It depends on [4Fe-4S] cluster as a cofactor.

This is an uncharacterized protein from Methanocaldococcus jannaschii (strain ATCC 43067 / DSM 2661 / JAL-1 / JCM 10045 / NBRC 100440) (Methanococcus jannaschii).